The chain runs to 474 residues: ATP synthase subunit beta 2 (474 aa).

Residue 153–160 (GGAGVGKT) participates in ATP binding.

Belongs to the ATPase alpha/beta chains family. F-type ATPases have 2 components, CF(1) - the catalytic core - and CF(0) - the membrane proton channel. CF(1) has five subunits: alpha(3), beta(3), gamma(1), delta(1), epsilon(1). CF(0) has three main subunits: a(1), b(2) and c(9-12). The alpha and beta chains form an alternating ring which encloses part of the gamma chain. CF(1) is attached to CF(0) by a central stalk formed by the gamma and epsilon chains, while a peripheral stalk is formed by the delta and b chains.

Its subcellular location is the cell inner membrane. It catalyses the reaction ATP + H2O + 4 H(+)(in) = ADP + phosphate + 5 H(+)(out). Its function is as follows. Produces ATP from ADP in the presence of a proton gradient across the membrane. The catalytic sites are hosted primarily by the beta subunits. The chain is ATP synthase subunit beta 2 from Syntrophotalea carbinolica (strain DSM 2380 / NBRC 103641 / GraBd1) (Pelobacter carbinolicus).